Here is a 130-residue protein sequence, read N- to C-terminus: Small ribosomal subunit protein uS9 (130 aa).

This sequence belongs to the universal ribosomal protein uS9 family.

The polypeptide is Small ribosomal subunit protein uS9 (Thiobacillus denitrificans (strain ATCC 25259 / T1)).